Here is a 530-residue protein sequence, read N- to C-terminus: 5-aminolevulinate synthase, mitochondrial (530 aa).

Residues 1-26 (MFRPVLKVRPSFSYPYSIVSSRSVRL) constitute a mitochondrion transit peptide. Residues R73, S186, and K205 each coordinate substrate. Pyridoxal 5'-phosphate-binding residues include S238, H266, and T316. Residue K319 is part of the active site. K319 is modified (N6-(pyridoxal phosphate)lysine). The pyridoxal 5'-phosphate site is built by T348 and T349. Residue T434 coordinates substrate.

It belongs to the class-II pyridoxal-phosphate-dependent aminotransferase family. As to quaternary structure, homodimer. The cofactor is pyridoxal 5'-phosphate.

It localises to the mitochondrion matrix. The enzyme catalyses succinyl-CoA + glycine + H(+) = 5-aminolevulinate + CO2 + CoA. The protein operates within porphyrin-containing compound metabolism; protoporphyrin-IX biosynthesis; 5-aminolevulinate from glycine: step 1/1. In terms of biological role, catalyzes the synthesis of 5-aminolevulinate (ALA) from succinyl-CoA and glycine, the first and rate-limiting step in heme biosynthesis. The protein is 5-aminolevulinate synthase, mitochondrial (HEM1) of Candida glabrata (strain ATCC 2001 / BCRC 20586 / JCM 3761 / NBRC 0622 / NRRL Y-65 / CBS 138) (Yeast).